We begin with the raw amino-acid sequence, 278 residues long: 2-dehydro-3-deoxyphosphooctonate aldolase (278 aa).

The protein belongs to the KdsA family.

Its subcellular location is the cytoplasm. It catalyses the reaction D-arabinose 5-phosphate + phosphoenolpyruvate + H2O = 3-deoxy-alpha-D-manno-2-octulosonate-8-phosphate + phosphate. It participates in carbohydrate biosynthesis; 3-deoxy-D-manno-octulosonate biosynthesis; 3-deoxy-D-manno-octulosonate from D-ribulose 5-phosphate: step 2/3. It functions in the pathway bacterial outer membrane biogenesis; lipopolysaccharide biosynthesis. The sequence is that of 2-dehydro-3-deoxyphosphooctonate aldolase from Fusobacterium nucleatum subsp. nucleatum (strain ATCC 25586 / DSM 15643 / BCRC 10681 / CIP 101130 / JCM 8532 / KCTC 2640 / LMG 13131 / VPI 4355).